A 305-amino-acid polypeptide reads, in one-letter code: NAD kinase 2 (305 aa).

The active-site Proton acceptor is the Asp-78. NAD(+)-binding positions include 78–79 (DG), 152–153 (NE), Asp-182, 193–198 (TAYSLS), and Asn-251.

This sequence belongs to the NAD kinase family. A divalent metal cation serves as cofactor.

It localises to the cytoplasm. It catalyses the reaction NAD(+) + ATP = ADP + NADP(+) + H(+). Functionally, involved in the regulation of the intracellular balance of NAD and NADP, and is a key enzyme in the biosynthesis of NADP. Catalyzes specifically the phosphorylation on 2'-hydroxyl of the adenosine moiety of NAD to yield NADP. The polypeptide is NAD kinase 2 (Synechococcus sp. (strain ATCC 27144 / PCC 6301 / SAUG 1402/1) (Anacystis nidulans)).